The chain runs to 297 residues: Homoserine kinase (297 aa).

Pro84–Ala94 contributes to the ATP binding site.

The protein belongs to the GHMP kinase family. Homoserine kinase subfamily.

The protein resides in the cytoplasm. The enzyme catalyses L-homoserine + ATP = O-phospho-L-homoserine + ADP + H(+). The protein operates within amino-acid biosynthesis; L-threonine biosynthesis; L-threonine from L-aspartate: step 4/5. Functionally, catalyzes the ATP-dependent phosphorylation of L-homoserine to L-homoserine phosphate. In Shouchella clausii (strain KSM-K16) (Alkalihalobacillus clausii), this protein is Homoserine kinase.